Consider the following 272-residue polypeptide: Dermonecrotic toxin SpeSicTox-betaIB2b (272 aa).

Histidine 5 is an active-site residue. Mg(2+)-binding residues include glutamate 25 and aspartate 27. The active-site Nucleophile is histidine 41. Cystine bridges form between cysteine 45/cysteine 51 and cysteine 47/cysteine 191. Aspartate 85 contributes to the Mg(2+) binding site.

It belongs to the arthropod phospholipase D family. Class II subfamily. The cofactor is Mg(2+). Expressed by the venom gland.

It localises to the secreted. The catalysed reaction is an N-(acyl)-sphingosylphosphocholine = an N-(acyl)-sphingosyl-1,3-cyclic phosphate + choline. It carries out the reaction an N-(acyl)-sphingosylphosphoethanolamine = an N-(acyl)-sphingosyl-1,3-cyclic phosphate + ethanolamine. The enzyme catalyses a 1-acyl-sn-glycero-3-phosphocholine = a 1-acyl-sn-glycero-2,3-cyclic phosphate + choline. It catalyses the reaction a 1-acyl-sn-glycero-3-phosphoethanolamine = a 1-acyl-sn-glycero-2,3-cyclic phosphate + ethanolamine. In terms of biological role, dermonecrotic toxins cleave the phosphodiester linkage between the phosphate and headgroup of certain phospholipids (sphingolipid and lysolipid substrates), forming an alcohol (often choline) and a cyclic phosphate. This toxin acts on sphingomyelin (SM). It may also act on ceramide phosphoethanolamine (CPE), lysophosphatidylcholine (LPC) and lysophosphatidylethanolamine (LPE), but not on lysophosphatidylserine (LPS), and lysophosphatidylglycerol (LPG). It acts by transphosphatidylation, releasing exclusively cyclic phosphate products as second products. Induces dermonecrosis, hemolysis, increased vascular permeability, edema, inflammatory response, and platelet aggregation. In Sicarius peruensis (Six-eyed sand spider), this protein is Dermonecrotic toxin SpeSicTox-betaIB2b.